Here is a 302-residue protein sequence, read N- to C-terminus: MSVVSSVTVKVPGTTANLGPGFDCIGAALTIYNQFQFTRLETSELIIQATGAEAERVPTDESNLLYQAFVKLYQYIDQTPPGVKVEIELGVPLARGLGSSATAIVGGLVAANRLAGEPLSQAQVMELAIAIEGHPDNVVPALVGGCRLAATGAMGWEICDVPWHGDIVPVLAIPDFELSTSEARRVLPTEYSRADAIFNTAHLGLLLRGLQTGKGEWLRAALQDKLHQPYRQALIPGYDAVNTAAVAAGAYGMVISGAGPTLLALADVSHAAAVAAAMSTAWREAGIKAVVRSLALDTHGAT.

92–102 (PLARGLGSSAT) contributes to the ATP binding site.

This sequence belongs to the GHMP kinase family. Homoserine kinase subfamily.

The protein resides in the cytoplasm. It carries out the reaction L-homoserine + ATP = O-phospho-L-homoserine + ADP + H(+). It functions in the pathway amino-acid biosynthesis; L-threonine biosynthesis; L-threonine from L-aspartate: step 4/5. Catalyzes the ATP-dependent phosphorylation of L-homoserine to L-homoserine phosphate. The chain is Homoserine kinase from Trichormus variabilis (strain ATCC 29413 / PCC 7937) (Anabaena variabilis).